A 235-amino-acid chain; its full sequence is tRNA (guanine-N(7)-)-methyltransferase (235 aa).

S-adenosyl-L-methionine-binding positions include G60, 83 to 84, 116 to 117, and L136; these read EI and NA. D139 is a catalytic residue. 214–216 lines the S-adenosyl-L-methionine pocket; it reads SEE.

It belongs to the class I-like SAM-binding methyltransferase superfamily. TrmB family.

The protein localises to the nucleus. It catalyses the reaction guanosine(46) in tRNA + S-adenosyl-L-methionine = N(7)-methylguanosine(46) in tRNA + S-adenosyl-L-homocysteine. Its pathway is tRNA modification; N(7)-methylguanine-tRNA biosynthesis. In terms of biological role, catalyzes the formation of N(7)-methylguanine at position 46 (m7G46) in tRNA. The sequence is that of tRNA (guanine-N(7)-)-methyltransferase from Anopheles gambiae (African malaria mosquito).